The primary structure comprises 318 residues: tRNA U34 carboxymethyltransferase (318 aa).

Carboxy-S-adenosyl-L-methionine-binding positions include K85, W99, K104, G124, 175–176 (LD), M190, Y194, and R311.

It belongs to the class I-like SAM-binding methyltransferase superfamily. CmoB family. As to quaternary structure, homotetramer.

It carries out the reaction carboxy-S-adenosyl-L-methionine + 5-hydroxyuridine(34) in tRNA = 5-carboxymethoxyuridine(34) in tRNA + S-adenosyl-L-homocysteine + H(+). Catalyzes carboxymethyl transfer from carboxy-S-adenosyl-L-methionine (Cx-SAM) to 5-hydroxyuridine (ho5U) to form 5-carboxymethoxyuridine (cmo5U) at position 34 in tRNAs. In Ruthia magnifica subsp. Calyptogena magnifica, this protein is tRNA U34 carboxymethyltransferase.